The chain runs to 394 residues: Na(+)/H(+) antiporter NhaA 2 (394 aa).

Helical transmembrane passes span 13–33, 58–78, 93–113, 124–144, 153–173, 176–196, 208–228, 260–280, 291–311, 327–347, and 361–381; these read FGGV…NGFL, LILW…GLEL, IALP…IFWA, GWAI…MLLG, IFLL…IAIF, TKLS…LWVL, ILVT…ATIA, YFIL…GVQI, IFFG…YIFI, FYGV…VNSL, and LGIL…LLVF.

The protein belongs to the NhaA Na(+)/H(+) (TC 2.A.33) antiporter family.

It is found in the cell inner membrane. The catalysed reaction is Na(+)(in) + 2 H(+)(out) = Na(+)(out) + 2 H(+)(in). Functionally, na(+)/H(+) antiporter that extrudes sodium in exchange for external protons. This chain is Na(+)/H(+) antiporter NhaA 2, found in Campylobacter fetus subsp. fetus (strain 82-40).